The sequence spans 647 residues: Shugoshin-2 (647 aa).

Ser-7 bears the Phosphoserine mark. Coiled coils occupy residues Ser-28–Glu-87 and Asp-125–Ser-145. The segment at Arg-171–Lys-295 is disordered. A compositionally biased stretch (low complexity) spans Asn-200–Asn-210. Ser-240 carries the phosphoserine modification. Composition is skewed to polar residues over residues Lys-242–Ala-253 and Arg-282–Pro-293. Thr-292 carries the post-translational modification Phosphothreonine. Phosphoserine is present on residues Ser-332 and Ser-335. 2 stretches are compositionally biased toward polar residues: residues Ser-375–Val-396 and Glu-462–Pro-478. 4 disordered regions span residues Ser-375–Val-416, Arg-453–Gly-486, Thr-522–Lys-579, and Arg-593–Leu-647. Basic and acidic residues-rich tracts occupy residues Asn-528–Glu-541 and Arg-593–Val-602. The segment covering Lys-621 to Leu-647 has biased composition (polar residues).

It belongs to the shugoshin family.

Its subcellular location is the chromosome. It localises to the centromere. Functionally, involved in chromosome cohesion during mitosis and meiosis by preventing premature dissociation of cohesin complex from centromeres after prophase, when most of cohesin complex dissociates from chromosomes arms. Required for faithful mitotic chromosome segregation and proper kinetochore orientation during meiosis I. In contrast to sgo1, it is dispensable for centromeric protection of rec8 during meiosis I as well as protection of rad21 during mitosis. Required to sense the lack of tension at centromeres during mitosis. This Schizosaccharomyces pombe (strain 972 / ATCC 24843) (Fission yeast) protein is Shugoshin-2 (sgo2).